A 349-amino-acid polypeptide reads, in one-letter code: UDP-N-acetylenolpyruvoylglucosamine reductase (349 aa).

The FAD-binding PCMH-type domain occupies 25–197 (GIAATARYAA…VAVTFRLPKR (173 aa)). Residue R173 is part of the active site. S249 serves as the catalytic Proton donor. E345 is a catalytic residue.

Belongs to the MurB family. The cofactor is FAD.

The protein resides in the cytoplasm. The enzyme catalyses UDP-N-acetyl-alpha-D-muramate + NADP(+) = UDP-N-acetyl-3-O-(1-carboxyvinyl)-alpha-D-glucosamine + NADPH + H(+). The protein operates within cell wall biogenesis; peptidoglycan biosynthesis. Cell wall formation. The protein is UDP-N-acetylenolpyruvoylglucosamine reductase of Burkholderia vietnamiensis (strain G4 / LMG 22486) (Burkholderia cepacia (strain R1808)).